The primary structure comprises 483 residues: Beta-glucosidase 4 (483 aa).

Residues glutamine 29, histidine 131, 176–177 (NE), tyrosine 310, and glutamate 380 each bind a beta-D-glucoside. Residue glutamate 177 is the Proton donor of the active site. The Nucleophile role is filled by glutamate 380. Asparagine 398 carries N-linked (GlcNAc...) asparagine glycosylation. A beta-D-glucoside is bound by residues tryptophan 429, 436 to 437 (EW), and phenylalanine 445.

Belongs to the glycosyl hydrolase 1 family.

The catalysed reaction is Hydrolysis of terminal, non-reducing beta-D-glucosyl residues with release of beta-D-glucose.. This chain is Beta-glucosidase 4 (BGLU4), found in Oryza sativa subsp. japonica (Rice).